A 364-amino-acid polypeptide reads, in one-letter code: MTDVNGAPADVLHTLFHSDQGGHEQVVLCQDRASGLKAVIALHSTALGPALGGTRFYPYASEAEAVADALNLARGMSYKNAMAGLDHGGGKAVIIGDPEQIKSEELLLAYGRFVASLGGRYVTACDVGTYVADMDVVARECRWTTGRSPENGGAGDSSVLTSFGVYQGMRAAAQHLWGDPTLRDRTVGIAGVGKVGHHLVEHLLAEGAHVVVTDVRKDVVRGITERHPSVVAVADTDALIRVENLDIYAPCALGGALNDDTVPVLTAKVVCGAANNQLAHPGVEKDLADRGILYAPDYVVNAGGVIQVADELHGFDFDRCKAKASKIYDTTLAIFARAKEDGIPPAAAADRIAEQRMAEARPRP.

The active site involves lysine 91. 191 to 197 lines the NAD(+) pocket; it reads GVGKVGH.

It belongs to the Glu/Leu/Phe/Val dehydrogenases family. As to quaternary structure, homodimer.

It is found in the cytoplasm. It catalyses the reaction L-valine + NAD(+) + H2O = 3-methyl-2-oxobutanoate + NH4(+) + NADH + H(+). Its pathway is amino-acid degradation; L-valine degradation. Its activity is regulated as follows. Repressed in minimal medium by the presence of glucose and NH4(+), glycerol and NH4(+), or glycerol and asparagine. In terms of biological role, oxidative deamination of branched-chain amino acids. Oxidizes L-valine and L-alpha-aminobutyric acid efficiently, and L-isoleucine and L-leucine less efficiently. Does not act on D-valine. The catabolism of L-valine is the major source of fatty acid precursors for macrolide biosynthesis and a vital source of antibiotic precursors. Uses NAD; no activity was found with NADP. The chain is Valine dehydrogenase (vdh) from Streptomyces coelicolor (strain ATCC BAA-471 / A3(2) / M145).